We begin with the raw amino-acid sequence, 352 residues long: MGLKIVDGSIVHDNLTSSSPPSVTNSSPLLNTKRRNSITSLSDYKKNKDTLNNSNNNINQPFENSNNFNNNSKEIKNENKIKNFFQHLFSILLLKNPTMIQIIETLELSTNIYNIQFKLKYLLAICVSSQIIFKSSGLLITLLVLYLGTFFNKISINNKDKNKNNNTIDYSLKNNNIDTSLIKDINNSVISNNSSNSNNNNINNSNNNNNNNNRILSPNQLSKSSNVEYNKCKCKSPTTSSNNYLSSSQSRVQTLSSPNISPCNICVSPNLLYNSLSSLSSSLPINSCNYSMSEQEGDEFESNFDFEDSQYEESDEEDNSSPAFHLYSSPNLRVACNKISTFSPNGRKLGTN.

Asparagine 14, asparagine 52, and asparagine 70 each carry an N-linked (GlcNAc...) asparagine glycan. The segment at 41 to 73 is disordered; the sequence is LSDYKKNKDTLNNSNNNINQPFENSNNFNNNSK. Residues 50 to 72 are compositionally biased toward low complexity; that stretch reads TLNNSNNNINQPFENSNNFNNNS. Residues 131–151 traverse the membrane as a helical segment; the sequence is IIFKSSGLLITLLVLYLGTFF. Residues asparagine 165, asparagine 186, asparagine 192, asparagine 193, asparagine 203, and asparagine 289 are each glycosylated (N-linked (GlcNAc...) asparagine). Over residues 193–213 the composition is skewed to low complexity; it reads NSSNSNNNNINNSNNNNNNNN. The interval 193–219 is disordered; sequence NSSNSNNNNINNSNNNNNNNNRILSPN.

The protein resides in the membrane. This is an uncharacterized protein from Dictyostelium discoideum (Social amoeba).